A 434-amino-acid polypeptide reads, in one-letter code: ATP phosphoribosyltransferase regulatory subunit (434 aa).

Residues 1 to 48 (MYGRGSGAEHSRGSGAEHFWDPRPEASSTVSSSLRPPSGARDLLPREV) are disordered. A compositionally biased stretch (low complexity) spans 27 to 38 (SSTVSSSLRPPS).

It belongs to the class-II aminoacyl-tRNA synthetase family. HisZ subfamily. As to quaternary structure, heteromultimer composed of HisG and HisZ subunits.

The protein localises to the cytoplasm. The protein operates within amino-acid biosynthesis; L-histidine biosynthesis; L-histidine from 5-phospho-alpha-D-ribose 1-diphosphate: step 1/9. In terms of biological role, required for the first step of histidine biosynthesis. May allow the feedback regulation of ATP phosphoribosyltransferase activity by histidine. In Synechococcus sp. (strain JA-2-3B'a(2-13)) (Cyanobacteria bacterium Yellowstone B-Prime), this protein is ATP phosphoribosyltransferase regulatory subunit.